The sequence spans 222 residues: Ribosome maturation factor RimM (222 aa).

The disordered stretch occupies residues Met-1–Glu-22. The 78-residue stretch at Glu-145 to Tyr-222 folds into the PRC barrel domain.

Belongs to the RimM family. Binds ribosomal protein uS19.

Its subcellular location is the cytoplasm. An accessory protein needed during the final step in the assembly of 30S ribosomal subunit, possibly for assembly of the head region. Essential for efficient processing of 16S rRNA. May be needed both before and after RbfA during the maturation of 16S rRNA. It has affinity for free ribosomal 30S subunits but not for 70S ribosomes. In Cupriavidus necator (strain ATCC 17699 / DSM 428 / KCTC 22496 / NCIMB 10442 / H16 / Stanier 337) (Ralstonia eutropha), this protein is Ribosome maturation factor RimM.